The sequence spans 441 residues: Fibroleukin (441 aa).

The first 15 residues, 1–15, serve as a signal peptide directing secretion; sequence MKLANWCWLSSTVLA. A glycan (N-linked (GlcNAc...) asparagine) is linked at N25. The stretch at 73–167 forms a coiled coil; sequence SRIEEVFKEV…LEKLNLVNMN (95 aa). The disordered stretch occupies residues 102 to 128; that stretch reads QADDSRDPGRNGLLLPGTGAPGETGDN. Residues N179, N237, N265, and N338 are each glycosylated (N-linked (GlcNAc...) asparagine). The Fibrinogen C-terminal domain maps to 206–438; it reads VQQHLIYKDC…EVKMMIRPKH (233 aa).

As to quaternary structure, homotetramer; disulfide-linked.

It is found in the secreted. Its function is as follows. May play a role in physiologic lymphocyte functions at mucosal sites. The polypeptide is Fibroleukin (FGL2) (Bos taurus (Bovine)).